A 471-amino-acid polypeptide reads, in one-letter code: Sulfate adenylyltransferase subunit 1 (471 aa).

Positions 24 to 240 (KSLLRFLTCG…ESADVERELE (217 aa)) constitute a tr-type G domain. Residues 33-40 (GSVDDGKS) are G1. 33–40 (GSVDDGKS) contacts GTP. The G2 stretch occupies residues 91–95 (GITID). Residues 112 to 115 (DTPG) are G3. GTP contacts are provided by residues 112–116 (DTPGH) and 167–170 (NKMD). The interval 167 to 170 (NKMD) is G4. A G5 region spans residues 204–206 (SAL).

The protein belongs to the TRAFAC class translation factor GTPase superfamily. Classic translation factor GTPase family. CysN/NodQ subfamily. In terms of assembly, heterodimer composed of CysD, the smaller subunit, and CysN.

It carries out the reaction sulfate + ATP + H(+) = adenosine 5'-phosphosulfate + diphosphate. It functions in the pathway sulfur metabolism; hydrogen sulfide biosynthesis; sulfite from sulfate: step 1/3. Functionally, with CysD forms the ATP sulfurylase (ATPS) that catalyzes the adenylation of sulfate producing adenosine 5'-phosphosulfate (APS) and diphosphate, the first enzymatic step in sulfur assimilation pathway. APS synthesis involves the formation of a high-energy phosphoric-sulfuric acid anhydride bond driven by GTP hydrolysis by CysN coupled to ATP hydrolysis by CysD. The chain is Sulfate adenylyltransferase subunit 1 from Aeromonas salmonicida (strain A449).